Reading from the N-terminus, the 561-residue chain is 3-hydroxy-3-methylglutaryl-coenzyme A reductase 3 (561 aa).

The next 2 membrane-spanning stretches (helical) occupy residues 25–45 and 69–89; these read PIRH…AYLM and IFGL…AFVQ. Residues 90–145 are linker; the sequence is SIVSSSDDEEEDFLVGPARGSSAAAAVAPPPPPSSPAQCSLLGSPHDDAARERMPE. The disordered stretch occupies residues 113–146; it reads AAAVAPPPPPSSPAQCSLLGSPHDDAARERMPEE. A compositionally biased stretch (basic and acidic residues) spans 134 to 143; the sequence is PHDDAARERM. Residues 146–561 are catalytic; that stretch reads EDEEIVSSVV…SSKDMSKVIS (416 aa). E240 functions as the Charge relay system in the catalytic mechanism. N304 carries N-linked (GlcNAc...) asparagine glycosylation. Catalysis depends on charge relay system residues K372 and D448. H546 acts as the Proton donor in catalysis. N550 carries an N-linked (GlcNAc...) asparagine glycan.

It belongs to the HMG-CoA reductase family.

Its subcellular location is the endoplasmic reticulum membrane. It catalyses the reaction (R)-mevalonate + 2 NADP(+) + CoA = (3S)-3-hydroxy-3-methylglutaryl-CoA + 2 NADPH + 2 H(+). It participates in metabolic intermediate biosynthesis; (R)-mevalonate biosynthesis; (R)-mevalonate from acetyl-CoA: step 3/3. Catalyzes the synthesis of mevalonate. The specific precursor of all isoprenoid compounds present in plants. The polypeptide is 3-hydroxy-3-methylglutaryl-coenzyme A reductase 3 (HMG3) (Oryza sativa subsp. japonica (Rice)).